The chain runs to 932 residues: Protein translocase subunit SecA (932 aa).

ATP contacts are provided by residues Q86, 104 to 108, and D494; that span reads GEGKT. The segment at 857–932 is disordered; the sequence is EDAGAEAHAS…KPAPKRKKRR (76 aa). Over residues 905-915 the composition is skewed to polar residues; it reads TAGSAGDSNLP. Basic residues predominate over residues 920–932; that stretch reads KTNKPAPKRKKRR.

Belongs to the SecA family. In terms of assembly, monomer and homodimer. Part of the essential Sec protein translocation apparatus which comprises SecA, SecYEG and auxiliary proteins SecDF. Other proteins may also be involved.

The protein resides in the cell membrane. Its subcellular location is the cytoplasm. It carries out the reaction ATP + H2O + cellular proteinSide 1 = ADP + phosphate + cellular proteinSide 2.. Its function is as follows. Part of the Sec protein translocase complex. Interacts with the SecYEG preprotein conducting channel. Has a central role in coupling the hydrolysis of ATP to the transfer of proteins into and across the cell membrane, serving as an ATP-driven molecular motor driving the stepwise translocation of polypeptide chains across the membrane. The chain is Protein translocase subunit SecA from Renibacterium salmoninarum (strain ATCC 33209 / DSM 20767 / JCM 11484 / NBRC 15589 / NCIMB 2235).